The following is a 177-amino-acid chain: Cytoglobin-1 (177 aa).

Residues 16 to 165 form the Globin domain; that stretch reads PLTDKERVMI…LCCSIKAVYE (150 aa). Heme b-binding residues include His79 and His111.

The protein belongs to the globin family. As to quaternary structure, monomeric.

The protein localises to the cytoplasm. It is found in the nucleus. The catalysed reaction is Fe(II)-heme b-[protein] + nitric oxide + O2 = Fe(III)-heme b-[protein] + nitrate. It carries out the reaction Fe(III)-heme b-[protein] + nitric oxide + H2O = Fe(II)-heme b-[protein] + nitrite + 2 H(+). It catalyses the reaction 2 superoxide + 2 H(+) = H2O2 + O2. The enzyme catalyses H2O2 + AH2 = A + 2 H2O. Functionally, probable multifunctional globin with a hexacoordinated heme iron required for the catalysis of various reactions depending on redox condition of the cell as well as oxygen availability. Has a nitric oxide dioxygenase (NOD) activity and is most probably involved in cell-mediated and oxygen-dependent nitric oxide consumption. Under normoxic conditions functions as a nitric oxide dioxygenase (NOD) but under hypoxic conditions the globin may switch its function to that of a nitrite (NO2) reductase (NiR), generating nitric oxide. Could also have peroxidase and superoxide dismutase activities, detoxifying reactive oxygen species and protecting cells against oxidative stress. Also binds dioxygen with low affinity and could function as an oxygen sensor but has probably no function as a respiratory oxygen carrier. The polypeptide is Cytoglobin-1 (Oryzias latipes (Japanese rice fish)).